A 280-amino-acid chain; its full sequence is MGRAELLEGKMSTQDPSDLWSRSDGEAELLQDLGWYHGNLTRHAAEALLLSNGCDGSYLLRDSNETTGLYSLSVRAKDSVKHFHVEYTGYSFKFGFNEFSSLKDFVKHFANQPLIGSETGTLMVLKHPYPRKVEEPSIYESVRVHTAMQTGRTEDDLVPTAPSLGTKEGYLTKQGGLVKTWKTRWFTLHRNELKYFKDQMSPEPIRILDLTECSAVQFDYSQERVNCFCLVFPFRTFYLCAKTGVEADEWIKILRWKLSQIRKQLNQGEGTIRSRSFIFK.

Residues 1–20 (MGRAELLEGKMSTQDPSDLW) form a disordered region. Residues 35-129 (WYHGNLTRHA…GTLMVLKHPY (95 aa)) enclose the SH2 domain. Y139 carries the phosphotyrosine modification. S141 carries the post-translational modification Phosphoserine. Residues 164–259 (LGTKEGYLTK…WIKILRWKLS (96 aa)) enclose the PH domain.

In terms of assembly, interacts with PtdIns(3,4,5)P3 and PLCG2. In vitro, interacts with PtdIns(3,4)P2. Phosphorylated on tyrosine residues. Highly expressed in placenta and lung, followed by brain, heart, kidney, liver, pancreas and skeletal muscle. Expressed by B-lymphocytes, but not T-lymphocytes or nonhematopoietic cells.

It is found in the cytoplasm. The protein resides in the membrane. Functionally, may act as a B-cell-associated adapter that regulates B-cell antigen receptor (BCR)-signaling downstream of PI3K. The polypeptide is Dual adapter for phosphotyrosine and 3-phosphotyrosine and 3-phosphoinositide (DAPP1) (Homo sapiens (Human)).